The following is a 211-amino-acid chain: UPF0056 membrane protein YvbG (211 aa).

A run of 6 helical transmembrane segments spans residues 1–21 (MMFS…NPIG), 47–67 (ILSF…FKLF), 69–89 (INIH…AYNL), 114–134 (ISVT…ATVM), 150–170 (MIGI…SAFI), and 188–208 (LILA…MFPV).

This sequence belongs to the UPF0056 (MarC) family.

It localises to the cell membrane. This chain is UPF0056 membrane protein YvbG (yvbG), found in Bacillus subtilis (strain 168).